The following is a 32-amino-acid chain: CLQFGSTCFLGDDDICCSGECFYSGGTFGICS.

Cystine bridges form between Cys1-Cys17, Cys8-Cys21, and Cys16-Cys31. A Serine amide modification is found at Ser32.

In terms of tissue distribution, expressed by the venom duct.

It localises to the secreted. Functionally, elicits hyperactivity when injected intracranially into mice and produces paralysis when injected into the pedal muscle of freshwater snails, Pomacea paludosa, but it has no apparent effect after intramuscular injection into the limpet Patella opea or the freshwater fish Lebistes reticulatus. This is Conotoxin sr7a from Conus spurius (Alphabet cone).